The chain runs to 179 residues: Inner membrane-spanning protein YciB (179 aa).

The next 5 membrane-spanning stretches (helical) occupy residues 22–42 (IYVA…FTWF), 50–70 (MTLI…VFHN), 76–96 (WKVT…QLVL), 121–141 (LAWA…AFWL), and 149–169 (FKVF…GVYI).

The protein belongs to the YciB family.

The protein resides in the cell inner membrane. Plays a role in cell envelope biogenesis, maintenance of cell envelope integrity and membrane homeostasis. In Serratia proteamaculans (strain 568), this protein is Inner membrane-spanning protein YciB.